A 444-amino-acid chain; its full sequence is MVTIKCVKARQIYDSRGNPTVEADIHLDDGTYARAAVPSGASTGVYEALELRDGGKDYMGKGVYKAVKNVNEIIGPALVGKDPTQQTAIDNFMVQQLDGTVNEWGWCKQKLGANAILAVSLAVCKAGAQVKKIPLYQHIAEIAGNKNMVLPVPAFNVINGGSHAGNKLAMQEFMILPTGASSFKEAMKMGSEVYHNLKSVIKKKYGQDATNVGDEGGFAPNIQENKEGLELLKTAIEKAGYTGKVVIGMDVAASEFYKEDKSYDLNFKEENNDGSQRISGEALKDLYKSFVAEYPIVSIEDPFDQDDWEHYAKMTAECGEKVQIVGDDLLVTNPKRVKKAIDENPCNALLLKVNQIGSVTESIEAVKMSKKAGWGVMASHRSGETEDTFIADLSVGLSTGQIKTGAPCRSERLAKYNQLLRIEEELGDKAVYAGANFRRPVEPY.

Substrate-binding residues include His-163 and Glu-172. Catalysis depends on Glu-215, which acts as the Proton donor. Mg(2+) is bound by residues Asp-250, Glu-300, and Asp-327. Residues Glu-300 and Asp-327 each coordinate substrate. Lys-352 serves as the catalytic Proton acceptor. Substrate is bound by residues 379 to 382 (SHRS) and Lys-403.

Belongs to the enolase family. Homodimer. The cofactor is Mg(2+).

The protein resides in the cytoplasm. The catalysed reaction is (2R)-2-phosphoglycerate = phosphoenolpyruvate + H2O. Its pathway is carbohydrate degradation; glycolysis; pyruvate from D-glyceraldehyde 3-phosphate: step 4/5. This Mesembryanthemum crystallinum (Common ice plant) protein is Enolase (PGH1).